A 483-amino-acid polypeptide reads, in one-letter code: Dual specificity protein phosphatase CDC14C (483 aa).

The tract at residues 1–45 (MKRKSEGRSSWAAATCSPCCSLTSPSVKKIRSPTQQDPRHRDPQD) is disordered. Residues 1 to 53 (MKRKSEGRSSWAAATCSPCCSLTSPSVKKIRSPTQQDPRHRDPQDDVYLDITD) carry the Nucleolar localization signal motif. Low complexity predominate over residues 12-26 (AAATCSPCCSLTSPS). Residues 43–197 (PQDDVYLDIT…AMQYGFLNFN (155 aa)) are a. Residues 198 to 211 (SFNLDEYEHYEKAE) form a linker region. Residues 212 to 378 (NGDLNWIIPD…EGDYFCQKLK (167 aa)) form a b region. Residues 213–373 (GDLNWIIPDR…TSLWLEGDYF (161 aa)) form the Tyrosine-protein phosphatase domain. Catalysis depends on Cys313, which acts as the Phosphocysteine intermediate. The segment at 407 to 426 (QDQQEPEPYSDDDEINGGTQ) is disordered. The segment covering 408 to 421 (DQQEPEPYSDDDEI) has biased composition (acidic residues). The helical transmembrane segment at 444–466 (ILLTCPLAVLTSALCSVVIWWIV) threads the bilayer.

This sequence belongs to the protein-tyrosine phosphatase family. Non-receptor class CDC14 subfamily.

The protein resides in the membrane. The protein localises to the nucleus. It localises to the nucleolus. Its subcellular location is the cytoplasm. It is found in the cytoskeleton. The enzyme catalyses O-phospho-L-tyrosyl-[protein] + H2O = L-tyrosyl-[protein] + phosphate. It catalyses the reaction O-phospho-L-seryl-[protein] + H2O = L-seryl-[protein] + phosphate. The catalysed reaction is O-phospho-L-threonyl-[protein] + H2O = L-threonyl-[protein] + phosphate. Functionally, dual-specificity phosphatase. Preferentially dephosphorylates proteins modified by proline-directed kinases. The chain is Dual specificity protein phosphatase CDC14C from Symphalangus syndactylus (Siamang).